The following is a 310-amino-acid chain: Vomeronasal type-1 receptor 53 (310 aa).

The Extracellular segment spans residues Met-1–Glu-20. The chain crosses the membrane as a helical span at residues Val-21–Gly-41. Residues Glu-42–Leu-50 lie on the Cytoplasmic side of the membrane. Residues Tyr-51 to Val-71 form a helical membrane-spanning segment. The Extracellular portion of the chain corresponds to Asp-72–Arg-93. Cysteines 85 and 172 form a disulfide. The chain crosses the membrane as a helical span at residues Leu-94–Leu-114. Over Ser-115 to Cys-134 the chain is Cytoplasmic. A helical transmembrane segment spans residues Ala-135–Ile-155. Residues Ala-156–Ser-183 are Extracellular-facing. The N-linked (GlcNAc...) asparagine glycan is linked to Asn-159. A helical membrane pass occupies residues Met-184 to Gly-204. Residues Gly-205–Arg-238 are Cytoplasmic-facing. The chain crosses the membrane as a helical span at residues Thr-239–His-259. At Ser-260–Ser-268 the chain is on the extracellular side. Residues Ile-269–Phe-289 traverse the membrane as a helical segment. Topologically, residues Ile-290–Ile-310 are cytoplasmic.

The protein belongs to the G-protein coupled receptor 1 family.

It localises to the cell membrane. In terms of biological role, putative pheromone receptor implicated in the regulation of social and reproductive behavior. This is Vomeronasal type-1 receptor 53 (Vmn1r53) from Mus musculus (Mouse).